The sequence spans 246 residues: Octanoyltransferase (246 aa).

In terms of domain architecture, BPL/LPL catalytic spans Gly-30–Val-227. Substrate contacts are provided by residues Arg-75 to His-82, Ala-155 to Gly-157, and Gly-168 to Ala-170. Cys-186 serves as the catalytic Acyl-thioester intermediate.

It belongs to the LipB family.

Its subcellular location is the cytoplasm. It catalyses the reaction octanoyl-[ACP] + L-lysyl-[protein] = N(6)-octanoyl-L-lysyl-[protein] + holo-[ACP] + H(+). The protein operates within protein modification; protein lipoylation via endogenous pathway; protein N(6)-(lipoyl)lysine from octanoyl-[acyl-carrier-protein]: step 1/2. Catalyzes the transfer of endogenously produced octanoic acid from octanoyl-acyl-carrier-protein onto the lipoyl domains of lipoate-dependent enzymes. Lipoyl-ACP can also act as a substrate although octanoyl-ACP is likely to be the physiological substrate. This chain is Octanoyltransferase, found in Acidobacterium capsulatum (strain ATCC 51196 / DSM 11244 / BCRC 80197 / JCM 7670 / NBRC 15755 / NCIMB 13165 / 161).